The chain runs to 253 residues: Discoidin-1 subunit B/C (253 aa).

Ser2 bears the N-acetylserine mark. Residues 2–152 form the F5/8 type C domain; it reads STQGLVQLIS…ISLRCEFYTQ (151 aa). Residues 79–81 carry the Cell attachment site motif; that stretch reads RGD.

Tetramer of four different chains (A to D). Stalk cells.

The protein resides in the cytoplasm. Its function is as follows. Galactose- and N-acetylgalactosamine-binding lectin. May play a role in cell-substratum adhesion rather than in cell-cell adhesion. May be necessary for the maintenance of normal elongate morphology during aggregation. This chain is Discoidin-1 subunit B/C (dscC-1), found in Dictyostelium discoideum (Social amoeba).